The sequence spans 218 residues: UPF0329 protein ECU10_1860 (218 aa).

Belongs to the UPF0329 family.

The polypeptide is UPF0329 protein ECU10_1860 (Encephalitozoon cuniculi (strain GB-M1) (Microsporidian parasite)).